A 308-amino-acid polypeptide reads, in one-letter code: UPF0282 protein PYRAB09800 (308 aa).

Belongs to the UPF0282 family.

This Pyrococcus abyssi (strain GE5 / Orsay) protein is UPF0282 protein PYRAB09800.